We begin with the raw amino-acid sequence, 368 residues long: tRNA(Met) cytidine acetate ligase (368 aa).

Residues I7–L20, G96, N152, and R175 contribute to the ATP site.

It belongs to the TmcAL family.

The protein localises to the cytoplasm. The catalysed reaction is cytidine(34) in elongator tRNA(Met) + acetate + ATP = N(4)-acetylcytidine(34) in elongator tRNA(Met) + AMP + diphosphate. Catalyzes the formation of N(4)-acetylcytidine (ac(4)C) at the wobble position of elongator tRNA(Met), using acetate and ATP as substrates. First activates an acetate ion to form acetyladenylate (Ac-AMP) and then transfers the acetyl group to tRNA to form ac(4)C34. The sequence is that of tRNA(Met) cytidine acetate ligase from Streptococcus pyogenes serotype M4 (strain MGAS10750).